A 225-amino-acid chain; its full sequence is NAD(P)H-quinone oxidoreductase subunit K, chloroplastic (225 aa).

C43, C44, C108, and C139 together coordinate [4Fe-4S] cluster.

It belongs to the complex I 20 kDa subunit family. As to quaternary structure, NDH is composed of at least 16 different subunits, 5 of which are encoded in the nucleus. [4Fe-4S] cluster is required as a cofactor.

Its subcellular location is the plastid. It localises to the chloroplast thylakoid membrane. The catalysed reaction is a plastoquinone + NADH + (n+1) H(+)(in) = a plastoquinol + NAD(+) + n H(+)(out). It carries out the reaction a plastoquinone + NADPH + (n+1) H(+)(in) = a plastoquinol + NADP(+) + n H(+)(out). Functionally, NDH shuttles electrons from NAD(P)H:plastoquinone, via FMN and iron-sulfur (Fe-S) centers, to quinones in the photosynthetic chain and possibly in a chloroplast respiratory chain. The immediate electron acceptor for the enzyme in this species is believed to be plastoquinone. Couples the redox reaction to proton translocation, and thus conserves the redox energy in a proton gradient. The sequence is that of NAD(P)H-quinone oxidoreductase subunit K, chloroplastic from Platanus occidentalis (Sycamore).